The chain runs to 396 residues: S-adenosylmethionine synthase 3 (396 aa).

Glutamate 12 is a binding site for Mg(2+). Histidine 18 provides a ligand contact to ATP. Glutamate 46 lines the K(+) pocket. 2 residues coordinate L-methionine: glutamate 59 and glutamine 102. Residues 170-172 (DGK), 238-241 (SGRF), aspartate 249, 255-256 (RK), alanine 272, lysine 276, and lysine 280 contribute to the ATP site. Aspartate 249 is an L-methionine binding site. Position 280 (lysine 280) interacts with L-methionine.

It belongs to the AdoMet synthase family. In terms of assembly, homotetramer. It depends on Mn(2+) as a cofactor. The cofactor is Mg(2+). Co(2+) serves as cofactor. K(+) is required as a cofactor.

It localises to the cytoplasm. The catalysed reaction is L-methionine + ATP + H2O = S-adenosyl-L-methionine + phosphate + diphosphate. It functions in the pathway amino-acid biosynthesis; S-adenosyl-L-methionine biosynthesis; S-adenosyl-L-methionine from L-methionine: step 1/1. Its function is as follows. Catalyzes the formation of S-adenosylmethionine from methionine and ATP. The reaction comprises two steps that are both catalyzed by the same enzyme: formation of S-adenosylmethionine (AdoMet) and triphosphate, and subsequent hydrolysis of the triphosphate. This chain is S-adenosylmethionine synthase 3 (METK3), found in Oryza sativa subsp. japonica (Rice).